The following is a 478-amino-acid chain: UDP-N-acetylmuramate--L-alanine ligase (478 aa).

Position 130–136 (glycine 130–threonine 136) interacts with ATP.

It belongs to the MurCDEF family.

It localises to the cytoplasm. The enzyme catalyses UDP-N-acetyl-alpha-D-muramate + L-alanine + ATP = UDP-N-acetyl-alpha-D-muramoyl-L-alanine + ADP + phosphate + H(+). It functions in the pathway cell wall biogenesis; peptidoglycan biosynthesis. Functionally, cell wall formation. The protein is UDP-N-acetylmuramate--L-alanine ligase of Microcystis aeruginosa (strain NIES-843 / IAM M-2473).